We begin with the raw amino-acid sequence, 454 residues long: Guanine deaminase (454 aa).

Zn(2+) is bound by residues His-82 and His-84. Substrate-binding positions include 84 to 87 (HAPQ), 213 to 214 (RF), 240 to 243 (HISE), and Asp-330. Positions 240 and 330 each coordinate Zn(2+). Residue Ser-453 is modified to Phosphoserine.

This sequence belongs to the metallo-dependent hydrolases superfamily. ATZ/TRZ family. Homodimer. Zn(2+) serves as cofactor.

It catalyses the reaction guanine + H2O + H(+) = xanthine + NH4(+). The protein operates within purine metabolism; guanine degradation; xanthine from guanine: step 1/1. Its function is as follows. Catalyzes the hydrolytic deamination of guanine, producing xanthine and ammonia. The sequence is that of Guanine deaminase from Mus musculus (Mouse).